Consider the following 225-residue polypeptide: MCHVIVTCRSMLWTLLSIVAAFSELIAFLSTDWLVGFPRAPDAGFSPLGATAAGEAYRPTLGIYGRCIRVPHYRRGVLCGPYAVHFGEIASGFWQATAIFLAAGILLLCAVAFISIFTMCFQSIMKKSIFNVCGLLQAIAGLFLIVGLVLYPAGWGSQKVQLYCGPDSSPYRLGLCSAGWAFYTALAGTVLCFLCAVFSAQAEIATSSDKVQEEIQEGKSLICLL.

4 helical membrane passes run 11–31 (MLWTLLSIVAAFSELIAFLST), 99–119 (IFLAAGILLLCAVAFISIFTM), 129–149 (IFNVCGLLQAIAGLFLIVGLV), and 178–198 (AGWAFYTALAGTVLCFLCAVF).

This sequence belongs to the LHFP family.

The protein localises to the membrane. Plays a role in fertility. Involved in distal reproductive tract development. The protein is LHFPL tetraspan subfamily member 2a protein of Danio rerio (Zebrafish).